A 441-amino-acid chain; its full sequence is 3'-N-debenzoyl-2'-deoxytaxol N-benzoyltransferase (441 aa).

Residues H163 and D373 each act as proton acceptor in the active site.

It belongs to the plant acyltransferase family.

The enzyme catalyses 3'-N-debenzoyltaxol + benzoyl-CoA = paclitaxel + CoA + H(+). The protein operates within alkaloid biosynthesis; taxol biosynthesis. Its function is as follows. Catalyzes the stereoselective coupling of the surrogate substrate N-debenzoyl-(3'RS)-2'-deoxytaxol with benzoyl-CoA to form predominantly one 3'-epimer of 2'-deoxytaxol. This enzymatic reaction constitutes the final acylation in the taxol biosynthetic pathway. The protein is 3'-N-debenzoyl-2'-deoxytaxol N-benzoyltransferase of Taxus canadensis (Canadian yew).